Consider the following 70-residue polypeptide: Peptide BmKn2 (70 aa).

The signal sequence occupies residues 1 to 23; sequence MKSQTFFLLFLVVLLLAISQSEA. At Phe36 the chain carries Phenylalanine amide. The propeptide occupies 40-70; it reads SMRDMDTMKYLYDPSLSAADLKTLQKLMENY.

Belongs to the non-disulfide-bridged peptide (NDBP) superfamily. Short antimicrobial peptide (group 4) family. Expressed by the venom gland.

The protein resides in the secreted. The protein localises to the target cell membrane. Its function is as follows. Antimicrobial peptide with potent activity against bacteria. Has strong antibacterial activity against Gram-positive bacteria S.aureus, M.luteus, B.subtilis, and Gram-negative bacteria E.coli, P.aeruginosa and N.gonorrhoeae. Also shows low activity against HIV-1 PV. The polypeptide is Peptide BmKn2 (Olivierus martensii (Manchurian scorpion)).